Consider the following 100-residue polypeptide: Small ribosomal subunit protein uS14c (100 aa).

A disordered region spans residues 1 to 31; that stretch reads MAKKSLIQREKKRQKLEQKYHSIRRSSKKEI.

Belongs to the universal ribosomal protein uS14 family. Part of the 30S ribosomal subunit.

The protein localises to the plastid. Its subcellular location is the chloroplast. Functionally, binds 16S rRNA, required for the assembly of 30S particles. This is Small ribosomal subunit protein uS14c from Atropa belladonna (Belladonna).